Consider the following 1391-residue polypeptide: DNA-directed RNA polymerase subunit beta' (1391 aa).

Positions 72, 74, 87, and 90 each coordinate Zn(2+). The Mg(2+) site is built by Asp-462, Asp-464, and Asp-466. Zn(2+) is bound by residues Cys-816, Cys-890, Cys-897, and Cys-900.

This sequence belongs to the RNA polymerase beta' chain family. As to quaternary structure, the RNAP catalytic core consists of 2 alpha, 1 beta, 1 beta' and 1 omega subunit. When a sigma factor is associated with the core the holoenzyme is formed, which can initiate transcription. The cofactor is Mg(2+). Requires Zn(2+) as cofactor.

It carries out the reaction RNA(n) + a ribonucleoside 5'-triphosphate = RNA(n+1) + diphosphate. Its function is as follows. DNA-dependent RNA polymerase catalyzes the transcription of DNA into RNA using the four ribonucleoside triphosphates as substrates. This Neisseria meningitidis serogroup C / serotype 2a (strain ATCC 700532 / DSM 15464 / FAM18) protein is DNA-directed RNA polymerase subunit beta'.